Here is a 148-residue protein sequence, read N- to C-terminus: Suppressor APC domain-containing protein 1 (148 aa).

Residues Ser120–Val148 are disordered.

The polypeptide is Suppressor APC domain-containing protein 1 (SAPCD1) (Homo sapiens (Human)).